The primary structure comprises 50 residues: Toxic protein HokE (50 aa).

Residues 5–25 (YALAAVIVLCLTVLGFTLLVG) form a helical membrane-spanning segment.

It belongs to the Hok/Gef family.

It localises to the cell inner membrane. Toxic component of a type I toxin-antitoxin (TA) system; if it expressed it could be neutralized by antisense antitoxin RNA SokE. This Escherichia coli (strain K12) protein is Toxic protein HokE.